A 555-amino-acid chain; its full sequence is MPLELTQSRVQKIWVPVDHRPSLPRSCGPKLTNSPTVIVMVGLPARGKTYISKKLTRYLNWIGVPTKVFNVGEYRREAVKQYSSYNFFRPDNEEAMRVRKQCALAALRDVKSYLTKEGGQIAVFDATNTTRERRHMILHFAKENDFKAFFIESVCDDPTVVASNIMEVKISSPDYKDCNSAEAMDDFMKRINCYEASYQPLDPDKCDRDLSFIKVIDVGRRFLVNRVQDHIQSRIVYYLMNIHVQPRTIYLCRHGENEYNVQGKIGGDSGLSSRGKKFANALSKFVEEQNLKDLRVWTSQLKSTIQTAEALRLPYEQWKALNEIDAGVCEELTYEEIRDTYPEEYALREQDKYYYRYPTGESYQDLVQRLEPVIMELERQENVLVICHQAVLRCLLAYFLDKSAEEMPYLKCPLHTVLKLTPVAYGCRVESIYLNVESVSTHRERSEAVKIQHFASVVRPSSYTELDFLSVESAKQDAKKGPNPLMRRNSVTPLASPEPTKKPRINSFEEHVASTSAALPSCLPPEVPTQLPGQPLLGKACLRTVCHIFSKFSPY.

Residues 1 to 245 (MPLELTQSRV…VYYLMNIHVQ (245 aa)) are 6-phosphofructo-2-kinase. 42 to 50 (GLPARGKTY) is a binding site for ATP. The beta-D-fructose 6-phosphate site is built by Arg75 and Arg99. Asp125 is a catalytic residue. 2 residues coordinate beta-D-fructose 6-phosphate: Thr127 and Arg133. Cys155 is an active-site residue. Residue 164 to 169 (NIMEVK) participates in ATP binding. 3 residues coordinate beta-D-fructose 6-phosphate: Lys169, Arg190, and Tyr194. A fructose-2,6-bisphosphatase region spans residues 246–555 (PRTIYLCRHG…CHIFSKFSPY (310 aa)). Beta-D-fructose 2,6-bisphosphate is bound at residue Arg253. His254 functions as the Tele-phosphohistidine intermediate in the catalytic mechanism. Positions 260 and 266 each coordinate beta-D-fructose 2,6-bisphosphate. The active-site Proton donor/acceptor is the Glu323. The beta-D-fructose 2,6-bisphosphate site is built by Tyr334, Arg348, Lys352, Tyr363, Gln389, and Arg393. Residue 345 to 348 (YALR) coordinates ATP. Residues 389-393 (QAVLR) and Tyr425 each bind ATP. The interval 475 to 504 (KQDAKKGPNPLMRRNSVTPLASPEPTKKPR) is disordered. The residue at position 490 (Ser490) is a Phosphoserine; by AMPK and PKA. Position 492 is a phosphothreonine (Thr492). Ser496 is subject to Phosphoserine.

The protein in the C-terminal section; belongs to the phosphoglycerate mutase family. As to quaternary structure, homodimer. Forms a heterodimer with PFKFB2. In terms of processing, phosphorylation by AMPK stimulates activity.

It catalyses the reaction beta-D-fructose 2,6-bisphosphate + H2O = beta-D-fructose 6-phosphate + phosphate. The enzyme catalyses beta-D-fructose 6-phosphate + ATP = beta-D-fructose 2,6-bisphosphate + ADP + H(+). Its function is as follows. Catalyzes both the synthesis and degradation of fructose 2,6-bisphosphate. The protein is 6-phosphofructo-2-kinase/fructose-2,6-bisphosphatase 3 (Pfkfb3) of Rattus norvegicus (Rat).